Consider the following 825-residue polypeptide: BEN domain-containing protein 3 (825 aa).

The span at 1-11 shows a compositional bias: acidic residues; the sequence is MNSTEISEDVE. The disordered stretch occupies residues 1 to 35; that stretch reads MNSTEISEDVEEVLKNNPVKAEGSDATLDCSRNSR. A Glycyl lysine isopeptide (Lys-Gly) (interchain with G-Cter in SUMO); alternate cross-link involves residue lysine 20. Lysine 20 participates in a covalent cross-link: Glycyl lysine isopeptide (Lys-Gly) (interchain with G-Cter in SUMO1); alternate. Residue lysine 20 forms a Glycyl lysine isopeptide (Lys-Gly) (interchain with G-Cter in SUMO2); alternate linkage. Residues lysine 39, lysine 54, lysine 56, lysine 71, lysine 126, lysine 127, lysine 135, lysine 140, lysine 156, and lysine 174 each participate in a glycyl lysine isopeptide (Lys-Gly) (interchain with G-Cter in SUMO2) cross-link. Residues 52 to 122 form a disordered region; it reads SSKRKQLDSD…EEEPSTEATV (71 aa). Positions 54–56 match the Nuclear localization signal motif; the sequence is KRK. The BEN 1 domain occupies 239 to 340; it reads PPPEYQLTAS…DFFSRFWAQR (102 aa). Residue serine 376 is modified to Phosphoserine. Residues 384–484 enclose the BEN 2 domain; sequence ASDHVVDTQD…DELEGLGLEG (101 aa). Lysine 424 participates in a covalent cross-link: Glycyl lysine isopeptide (Lys-Gly) (interchain with G-Cter in SUMO2). Serine 486 is modified (phosphoserine). Lysine 509 is covalently cross-linked (Glycyl lysine isopeptide (Lys-Gly) (interchain with G-Cter in SUMO); alternate). Residue lysine 509 forms a Glycyl lysine isopeptide (Lys-Gly) (interchain with G-Cter in SUMO2); alternate linkage. Lysine 525 participates in a covalent cross-link: Glycyl lysine isopeptide (Lys-Gly) (interchain with G-Cter in SUMO2). A BEN 3 domain is found at 547 to 647; that stretch reads GSDCLLSKEQ…ERCRRRDTEQ (101 aa). Lysine 697 participates in a covalent cross-link: Glycyl lysine isopeptide (Lys-Gly) (interchain with G-Cter in SUMO2). One can recognise a BEN 4 domain in the interval 712–813; it reads VPSPYLLSDK…ERCRRPNRKK (102 aa).

As to quaternary structure, homooligomer, probably a homooctamer. Interacts with HDAC2 and HDAC3, but not HDAC1. Interacts with SALL4. Interacts with SMARCA5/SNF2H, BAZ2A/TIP5 and USP21. Interacts with the nucleosome remodeling and histone deacetylase (NuRD) repressor complex. Interacts (via BEN domains 1 and 3) with ERCC6L (via N-terminal TPR repeat); the interaction is direct. Post-translationally, sumoylated at Lys-20 by SUMO1 and at Lys-509 by SUMO1, SUMO2 and SUMO3. Sumoylation probably occurs sequentially, with that of Lys-20 preceding that of Lys-509. It does not alter association with heterochromatin, but is required for the repression of transcription.

The protein localises to the nucleus. The protein resides in the nucleolus. Functionally, transcriptional repressor which associates with the NoRC (nucleolar remodeling complex) complex and plays a key role in repressing rDNA transcription. The sumoylated form modulates the stability of the NoRC complex component BAZ2A/TIP5 by controlling its USP21-mediated deubiquitination. Binds to unmethylated major satellite DNA and is involved in the recruitment of the Polycomb repressive complex 2 (PRC2) to major satellites. Stimulates the ERCC6L translocase and ATPase activities. In Mus musculus (Mouse), this protein is BEN domain-containing protein 3 (Bend3).